The chain runs to 877 residues: Valine--tRNA ligase (877 aa).

The 'HIGH' region signature appears at 46 to 56 (PYPTGSIHMGH). The 'KMSKS' region motif lies at 529–533 (KMSKS). Lysine 532 contributes to the ATP binding site.

This sequence belongs to the class-I aminoacyl-tRNA synthetase family. ValS type 2 subfamily.

Its subcellular location is the cytoplasm. The catalysed reaction is tRNA(Val) + L-valine + ATP = L-valyl-tRNA(Val) + AMP + diphosphate. Its function is as follows. Catalyzes the attachment of valine to tRNA(Val). As ValRS can inadvertently accommodate and process structurally similar amino acids such as threonine, to avoid such errors, it has a 'posttransfer' editing activity that hydrolyzes mischarged Thr-tRNA(Val) in a tRNA-dependent manner. This chain is Valine--tRNA ligase, found in Methanothermobacter thermautotrophicus (strain ATCC 29096 / DSM 1053 / JCM 10044 / NBRC 100330 / Delta H) (Methanobacterium thermoautotrophicum).